Reading from the N-terminus, the 433-residue chain is Phosphomethylpyrimidine synthase 1 (433 aa).

Substrate-binding positions include Met-95, Tyr-124, His-163, 185–187 (SRG), 226–229 (NAMR), and Glu-265. His-269 is a Zn(2+) binding site. Tyr-292 provides a ligand contact to substrate. Residue His-333 coordinates Zn(2+). Residues Cys-408, Cys-411, and Cys-415 each contribute to the [4Fe-4S] cluster site.

It belongs to the ThiC family. It depends on [4Fe-4S] cluster as a cofactor.

The catalysed reaction is 5-amino-1-(5-phospho-beta-D-ribosyl)imidazole + S-adenosyl-L-methionine = 4-amino-2-methyl-5-(phosphooxymethyl)pyrimidine + CO + 5'-deoxyadenosine + formate + L-methionine + 3 H(+). It participates in cofactor biosynthesis; thiamine diphosphate biosynthesis. Its function is as follows. Catalyzes the synthesis of the hydroxymethylpyrimidine phosphate (HMP-P) moiety of thiamine from aminoimidazole ribotide (AIR) in a radical S-adenosyl-L-methionine (SAM)-dependent reaction. The chain is Phosphomethylpyrimidine synthase 1 from Methanothermobacter thermautotrophicus (strain ATCC 29096 / DSM 1053 / JCM 10044 / NBRC 100330 / Delta H) (Methanobacterium thermoautotrophicum).